Here is a 285-residue protein sequence, read N- to C-terminus: 2,3,4,5-tetrahydropyridine-2,6-dicarboxylate N-succinyltransferase (285 aa).

R111 and D148 together coordinate substrate.

This sequence belongs to the transferase hexapeptide repeat family. As to quaternary structure, homotrimer.

It localises to the cytoplasm. The catalysed reaction is (S)-2,3,4,5-tetrahydrodipicolinate + succinyl-CoA + H2O = (S)-2-succinylamino-6-oxoheptanedioate + CoA. It functions in the pathway amino-acid biosynthesis; L-lysine biosynthesis via DAP pathway; LL-2,6-diaminopimelate from (S)-tetrahydrodipicolinate (succinylase route): step 1/3. This Sinorhizobium medicae (strain WSM419) (Ensifer medicae) protein is 2,3,4,5-tetrahydropyridine-2,6-dicarboxylate N-succinyltransferase.